The following is a 514-amino-acid chain: WD repeat-containing protein 26 (514 aa).

Positions 9–84 (EHPSATKFRN…EYLEDGKVLE (76 aa)) constitute a CTLH domain. WD repeat units lie at residues 206-245 (EHCNEVWFCKFSNDGTKLATGSKDTTVIVWQVDADTHLLK), 252-291 (GHAYGVSYIAWSPDDSYLVACGPDDCSELWLWNVQTGELR), 297-337 (SHED…DSWE), 377-416 (QEDHPIMSFTISKNGRLALLNVATQGVHLWDLQDRVLVRK), 419-461 (GVTQ…PIAE), and 464-504 (GHTR…DHQN).

In terms of assembly, forms homooligomers. Identified in the CTLH complex that contains GID4, RANBP9 and/or RANBP10, MKLN1, MAEA, RMND5A (or alternatively its paralog RMND5B), GID8, ARMC8, WDR26 and YPEL5. Within this complex, MAEA, RMND5A (or alternatively its paralog RMND5B), GID8, WDR26, and RANBP9 and/or RANBP10 form the catalytic core, while GID4, MKLN1, ARMC8 and YPEL5 have ancillary roles. Interacts with DDB1-CUL4A/B E3 ligase complexes. Forms a complex composed of at least WDR26, a G-beta:gamma unit, and PLCB2. Interacts with AXIN1.

Its subcellular location is the cytoplasm. It localises to the nucleus. The protein resides in the mitochondrion. In terms of biological role, G-beta-like protein involved in cell signal transduction. Acts as a negative regulator in MAPK signaling pathway. Functions as a scaffolding protein to promote G beta:gamma-mediated PLCB2 plasma membrane translocation and subsequent activation in leukocytes. Core component of the CTLH E3 ubiquitin-protein ligase complex that selectively accepts ubiquitin from UBE2H and mediates ubiquitination and subsequent proteasomal degradation of the transcription factor HBP1. Acts as a negative regulator of the canonical Wnt signaling pathway through preventing ubiquitination of beta-catenin CTNNB1 by the beta-catenin destruction complex, thus negatively regulating CTNNB1 degradation. Protects cells from oxidative stress-induced apoptosis via the down-regulation of AP-1 transcriptional activity as well as by inhibiting cytochrome c release from mitochondria. Also protects cells by promoting hypoxia-mediated autophagy and mitophagy. The polypeptide is WD repeat-containing protein 26 (Wdr26) (Rattus norvegicus (Rat)).